The chain runs to 236 residues: Ion-translocating oxidoreductase complex subunit E (236 aa).

Helical transmembrane passes span 18-38 (ALVQLLGLCPLLAVSSTATNA), 39-59 (LGLGLATTLVLVLTNSAVSAL), 69-89 (IPIYVMIIASVVSAVQMLINA), 92-112 (FGLYQSLGIFIPLIVTNCIVI), 128-148 (ALDGLATGLGATAALFVLGAL), and 182-202 (PFLLAILPPGAFLGLGFMLAF). Residues 217-236 (RSAVGQALRGAAPTDNHEQA) form a disordered region.

Belongs to the NqrDE/RnfAE family. As to quaternary structure, the complex is composed of six subunits: RnfA, RnfB, RnfC, RnfD, RnfE and RnfG.

It is found in the cell inner membrane. Functionally, part of a membrane-bound complex that couples electron transfer with translocation of ions across the membrane. This is Ion-translocating oxidoreductase complex subunit E from Edwardsiella ictaluri (strain 93-146).